Here is a 96-residue protein sequence, read N- to C-terminus: Co-chaperonin GroES (96 aa).

It belongs to the GroES chaperonin family. In terms of assembly, heptamer of 7 subunits arranged in a ring. Interacts with the chaperonin GroEL.

The protein localises to the cytoplasm. Together with the chaperonin GroEL, plays an essential role in assisting protein folding. The GroEL-GroES system forms a nano-cage that allows encapsulation of the non-native substrate proteins and provides a physical environment optimized to promote and accelerate protein folding. GroES binds to the apical surface of the GroEL ring, thereby capping the opening of the GroEL channel. In Neisseria meningitidis serogroup B (strain ATCC BAA-335 / MC58), this protein is Co-chaperonin GroES.